A 692-amino-acid polypeptide reads, in one-letter code: Potassium-transporting ATPase ATP-binding subunit (692 aa).

4 helical membrane-spanning segments follow: residues 50-70, 74-94, 240-260, and 266-286; these read PIMF…FLPS, SIPG…VLFA, LTLI…YLGF, and VLVA…LSAI. The active-site 4-aspartylphosphate intermediate is D319. ATP-binding positions include D356, E360, 388–395, and K407; that span reads FKAETRMS. Residues D530 and D534 each coordinate Mg(2+). Helical transmembrane passes span 600–620, 628–648, and 672–692; these read FAII…LNIM, AILS…PLAM, and GGVI…GLFI.

Belongs to the cation transport ATPase (P-type) (TC 3.A.3) family. Type IA subfamily. The system is composed of three essential subunits: KdpA, KdpB and KdpC.

The protein localises to the cell membrane. It catalyses the reaction K(+)(out) + ATP + H2O = K(+)(in) + ADP + phosphate + H(+). Part of the high-affinity ATP-driven potassium transport (or Kdp) system, which catalyzes the hydrolysis of ATP coupled with the electrogenic transport of potassium into the cytoplasm. This subunit is responsible for energy coupling to the transport system and for the release of the potassium ions to the cytoplasm. This chain is Potassium-transporting ATPase ATP-binding subunit, found in Bacillus thuringiensis (strain Al Hakam).